We begin with the raw amino-acid sequence, 104 residues long: Flagellar hook-basal body complex protein FliE (104 aa).

The protein belongs to the FliE family.

The protein resides in the bacterial flagellum basal body. The sequence is that of Flagellar hook-basal body complex protein FliE from Salmonella agona (strain SL483).